We begin with the raw amino-acid sequence, 703 residues long: Calcium-responsive transcription factor (703 aa).

Disordered stretches follow at residues 1 to 61 (MEQS…QNIP), 130 to 150 (GPLV…SDRN), and 517 to 539 (GNSQ…SLSP). A compositionally biased stretch (basic and acidic residues) spans 9–22 (KVNHNDSEESKTDS). A compositionally biased stretch (polar residues) spans 23 to 34 (QHLTYMDSSEPS).

The protein localises to the nucleus. Functionally, acts as a transcriptional activator that mediates the calcium- and neuron-selective induction of BDNF exon III transcription. Binds to the consensus calcium-response element CaRE1 5'-CTATTTCGAG-3' sequence. The polypeptide is Calcium-responsive transcription factor (CARF) (Bos taurus (Bovine)).